A 597-amino-acid polypeptide reads, in one-letter code: Protein IQ-DOMAIN 29 (597 aa).

A disordered region spans residues 1-31 (MGKTPSPGKWIKSLLGKKSSKSSLEKGGEKL). 3 IQ domains span residues 106-134 (LEEA…GITR), 135-153 (VQAV…ATYS), and 157-183 (GIVK…QKTN). The interval 159–173 (VKVQALVRGKKARSS) is calmodulin-binding. Positions 264–271 (KKRSFQAV) match the Nuclear localization signal 1 motif. Disordered regions lie at residues 268-379 (FQAV…KKEI) and 407-597 (LIPV…EWKR). A compositionally biased stretch (low complexity) spans 289–300 (STTANSSTSRST). Over residues 319-329 (ELSKIENDKSK) the composition is skewed to basic and acidic residues. The Nuclear localization signal 2 motif lies at 356–363 (HKKASLSN). Residues 414–463 (KESDLDKDEKSLVLDKPEQDELRTAERDDKAEEELKTAERDDSAEEKIQE) are compositionally biased toward basic and acidic residues. Over residues 467–480 (QISSENGNVASENT) the composition is skewed to polar residues. Residues 481-500 (KPSDRRASLPAKIENHHQDD) show a composition bias toward basic and acidic residues. A compositionally biased stretch (polar residues) spans 572–584 (GSMNSDRSFSSSK). Residues 585 to 597 (DIGDKSTKAEWKR) are compositionally biased toward basic and acidic residues.

This sequence belongs to the IQD family. Binds to multiple calmodulin (CaM) in the presence of Ca(2+) and CaM-like proteins.

It is found in the nucleus. The protein resides in the nucleus envelope. Its subcellular location is the cytoplasm. The protein localises to the cytoskeleton. It localises to the cell membrane. May be involved in cooperative interactions with calmodulins or calmodulin-like proteins. Recruits calmodulin proteins to microtubules, thus being a potential scaffold in cellular signaling and trafficking. May associate with nucleic acids and regulate gene expression at the transcriptional or post-transcriptional level. The sequence is that of Protein IQ-DOMAIN 29 from Arabidopsis thaliana (Mouse-ear cress).